We begin with the raw amino-acid sequence, 576 residues long: Trehalase (576 aa).

Positions 1–20 (MTWELHLLLLLGLGLRSQEA) are cleaved as a signal peptide. A glycan (N-linked (GlcNAc...) asparagine) is linked at Asn75. Residues Arg165, 172-173 (WD), Asn209, and 218-220 (RSQ) contribute to the substrate site. A glycan (N-linked (GlcNAc...) asparagine) is linked at Asn258. Substrate-binding positions include 283-285 (RPE) and Gly316. Asp318 (proton donor/acceptor) is an active-site residue. A glycan (N-linked (GlcNAc...) asparagine) is linked at Asn366. Glu511 serves as the catalytic Proton donor/acceptor. Glu526 contributes to the substrate binding site. Residue Ser553 is the site of GPI-anchor amidated serine attachment. The propeptide at 554-576 (GTQLASLGPHCLVAALLLSLLLQ) is removed in mature form.

This sequence belongs to the glycosyl hydrolase 37 family. In terms of assembly, homodimer; disulfide-linked.

Its subcellular location is the cell membrane. The enzyme catalyses alpha,alpha-trehalose + H2O = alpha-D-glucose + beta-D-glucose. Functionally, intestinal trehalase is probably involved in the hydrolysis of ingested trehalose. The sequence is that of Trehalase from Mus musculus (Mouse).